A 304-amino-acid polypeptide reads, in one-letter code: MDPLEDVLTLLKTRSHLSASLVAGGRWAVRFDAPRVVKFNAVRRGTCQLEVDGIDEPIDLAEGDCYLLTRPRSFTLRSDPETAPVDGGVVFARAEDGIARAGQGDDVFLIGGGFSFGTRAQELLLDRLPPIVHVPADTPHAETVQWALTAIDQELTHRPMASTLIAEHLAVIMLVHVLRLHLERAPHAVSGWLAGLADPVVATALTCLHRDPARSWTVADLADTAAVSRSTLAARFKATVGQGPLEYLTRWRIELAARQLREGNATLASIAHSVGYGSESALSVAFKRVLGMPPGDYRKHPTMP.

The HTH araC/xylS-type domain maps to 202–300 (ATALTCLHRD…GMPPGDYRKH (99 aa)). DNA-binding regions (H-T-H motif) lie at residues 219-240 (ADLA…KATV) and 267-290 (LASI…KRVL).

In Streptomyces lividans, this protein is Putative AraC-like transcription regulator.